Here is a 270-residue protein sequence, read N- to C-terminus: Formamidopyrimidine-DNA glycosylase (270 aa).

The active-site Schiff-base intermediate with DNA is P2. Residue E3 is the Proton donor of the active site. Residue K57 is the Proton donor; for beta-elimination activity of the active site. The DNA site is built by H90, R109, and K150. The segment at 235–269 (LVYGNKDKPCPRCGTKIKSIIIGQRNSFFCPQCQK) adopts an FPG-type zinc-finger fold. The active-site Proton donor; for delta-elimination activity is the R259.

This sequence belongs to the FPG family. As to quaternary structure, monomer. The cofactor is Zn(2+).

The enzyme catalyses Hydrolysis of DNA containing ring-opened 7-methylguanine residues, releasing 2,6-diamino-4-hydroxy-5-(N-methyl)formamidopyrimidine.. The catalysed reaction is 2'-deoxyribonucleotide-(2'-deoxyribose 5'-phosphate)-2'-deoxyribonucleotide-DNA = a 3'-end 2'-deoxyribonucleotide-(2,3-dehydro-2,3-deoxyribose 5'-phosphate)-DNA + a 5'-end 5'-phospho-2'-deoxyribonucleoside-DNA + H(+). Involved in base excision repair of DNA damaged by oxidation or by mutagenic agents. Acts as a DNA glycosylase that recognizes and removes damaged bases. Has a preference for oxidized purines, such as 7,8-dihydro-8-oxoguanine (8-oxoG). Has AP (apurinic/apyrimidinic) lyase activity and introduces nicks in the DNA strand. Cleaves the DNA backbone by beta-delta elimination to generate a single-strand break at the site of the removed base with both 3'- and 5'-phosphates. In Histophilus somni (strain 129Pt) (Haemophilus somnus), this protein is Formamidopyrimidine-DNA glycosylase.